The primary structure comprises 358 residues: NADH-quinone oxidoreductase subunit H (358 aa).

Helical transmembrane passes span 20-40 (ITVGLVVSVIVKIVIILIPLI), 95-115 (ALFYIGPIMSLAPSFAAWAVI), 128-148 (IGLLYILMITSLSVYGVIIAG), 168-188 (ISYEIAMSAALVCVVMVSGSM), 206-226 (VFSWNWLPLFPIFIVYLISAV), 253-273 (GFAFALFFLAEYIFMILIAAL), 295-315 (TPSAFWMFAKMAAVLYWYLWI), and 334-354 (VLIPIGFAYIVILGVWMISPL).

The protein belongs to the complex I subunit 1 family. As to quaternary structure, NDH-1 is composed of 14 different subunits. Subunits NuoA, H, J, K, L, M, N constitute the membrane sector of the complex.

The protein resides in the cell inner membrane. The enzyme catalyses a quinone + NADH + 5 H(+)(in) = a quinol + NAD(+) + 4 H(+)(out). Its function is as follows. NDH-1 shuttles electrons from NADH, via FMN and iron-sulfur (Fe-S) centers, to quinones in the respiratory chain. The immediate electron acceptor for the enzyme in this species is believed to be ubiquinone. Couples the redox reaction to proton translocation (for every two electrons transferred, four hydrogen ions are translocated across the cytoplasmic membrane), and thus conserves the redox energy in a proton gradient. This subunit may bind ubiquinone. The protein is NADH-quinone oxidoreductase subunit H of Neisseria meningitidis serogroup B (strain ATCC BAA-335 / MC58).